The following is a 299-amino-acid chain: MPVSQSWWQVEVHCDPLLEDLLYWRLSEAGGRGFVCESKAQGLQVHSYFPAELWEETIRDRLLQEINADAADLGLPTPSLSWQTLDEEDWSESWKRHWQPQELGDRFLIQPAWLEPEPSDRLLLQLDPGTAFGTGAHPTTQLCLEGLETVPVADKVIADVGCGSGILAIGALLLGAKQVYAVDTDPLAVGATQANAALNDLEGDRFWTAIGSADQLQPLHAQGVRFDGFLCNILAHIIQALTPTLSELASPGSWAIFSGLLTSQADTVSVTLEEYGWVIRDRASQGDWCRLVADFRPER.

Thr140, Gly161, Asp183, and Asn232 together coordinate S-adenosyl-L-methionine.

It belongs to the methyltransferase superfamily. PrmA family.

Its subcellular location is the cytoplasm. The catalysed reaction is L-lysyl-[protein] + 3 S-adenosyl-L-methionine = N(6),N(6),N(6)-trimethyl-L-lysyl-[protein] + 3 S-adenosyl-L-homocysteine + 3 H(+). Methylates ribosomal protein L11. The sequence is that of Ribosomal protein L11 methyltransferase from Synechococcus elongatus (strain ATCC 33912 / PCC 7942 / FACHB-805) (Anacystis nidulans R2).